Here is a 341-residue protein sequence, read N- to C-terminus: Adenosine deaminase (341 aa).

Positions 15 and 17 each coordinate Zn(2+). Histidine 17, aspartate 19, and glycine 172 together coordinate substrate. Histidine 199 lines the Zn(2+) pocket. The active-site Proton donor is the glutamate 202. Aspartate 279 is a binding site for Zn(2+).

Belongs to the metallo-dependent hydrolases superfamily. Adenosine and AMP deaminases family. Adenosine deaminase subfamily. The cofactor is Zn(2+).

It carries out the reaction adenosine + H2O + H(+) = inosine + NH4(+). It catalyses the reaction 2'-deoxyadenosine + H2O + H(+) = 2'-deoxyinosine + NH4(+). In terms of biological role, catalyzes the hydrolytic deamination of adenosine and 2-deoxyadenosine. The protein is Adenosine deaminase of Streptococcus equi subsp. zooepidemicus (strain MGCS10565).